We begin with the raw amino-acid sequence, 896 residues long: Cytokine receptor common subunit beta (896 aa).

Residues 1–22 (MDQQMALTWGLCYMALVALCWG) form the signal peptide. Residues 23–441 (HGVTEAEETV…SEEYTWKTDW (419 aa)) are Extracellular-facing. Cys39 and Cys49 are joined by a disulfide. Asn62 carries N-linked (GlcNAc...) asparagine glycosylation. 2 cysteine pairs are disulfide-bonded: Cys77–Cys99 and Cys88–Cys94. The 108-residue stretch at 136 to 243 (PPLPKNVSIS…PEVHWDSQPG (108 aa)) folds into the Fibronectin type-III 1 domain. The N-linked (GlcNAc...) asparagine glycan is linked to Asn141. A compositionally biased stretch (low complexity) spans 220–233 (SPGSSLSGRPSRWS). A disordered region spans residues 220 to 243 (SPGSSLSGRPSRWSPEVHWDSQPG). Disulfide bonds link Cys253–Cys263 and Cys292–Cys310. A Fibronectin type-III 2 domain is found at 343-439 (QMEPPTLNLT…KWSEEYTWKT (97 aa)). A glycan (N-linked (GlcNAc...) asparagine) is linked at Asn350. A WSXWS motif motif is present at residues 428 to 432 (WSKWS). Residues 442–463 (VMPTLWIVLILVFLILTLLLIL) traverse the membrane as a helical segment. Topologically, residues 464-896 (RFGCVSVYRT…WDNSQSGKVC (433 aa)) are cytoplasmic. The Box 1 motif motif lies at 477–485 (WKEKIPNPS). Disordered regions lie at residues 543–620 (EDPN…GGSL) and 658–725 (CGSS…TGPL). 2 stretches are compositionally biased toward polar residues: residues 555–571 (PDTT…QLPN) and 658–668 (CGSSLETSGSP). Residues 716–725 (PVLTLPTGPL) show a composition bias toward low complexity. Phosphoserine is present on residues Ser752 and Ser754. At Tyr765 the chain carries Phosphotyrosine. The segment at 771–810 (SVSQAAKSPPGHPAPPVASSPTVIPGEPREEVGPASPHPE) is disordered.

It belongs to the type I cytokine receptor family. Type 4 subfamily. In terms of assembly, heterodimer of an alpha and a beta subunit. The beta subunit is common to the IL3, IL5 and GM-CSF receptors. The signaling GM-CSF receptor complex is a dodecamer of two head-to-head hexamers of two alpha, two beta, and two ligand subunits. Interacts with TMEM102; this interaction occurs preferentially in the absence of CSF2. Interacts with FCER1G; this interaction is direct. Interacts with LYN. May be phosphorylated by LYN.

Its subcellular location is the membrane. In terms of biological role, high affinity receptor for interleukin-3, interleukin-5 and granulocyte-macrophage colony-stimulating factor. The polypeptide is Cytokine receptor common subunit beta (Csf2rb) (Mus musculus (Mouse)).